Reading from the N-terminus, the 295-residue chain is Enolase-phosphatase E1 (295 aa).

Positions 20 and 22 each coordinate Mg(2+). Substrate is bound by residues 153 to 154 (SS) and Lys187. Asp212 is a Mg(2+) binding site. The interval 260-295 (ETKEENGGATNGKRKIEETNDDVAEEDKAQVYPNKK) is disordered.

This sequence belongs to the HAD-like hydrolase superfamily. MasA/MtnC family. Monomer. Requires Mg(2+) as cofactor.

The protein resides in the cytoplasm. It is found in the nucleus. It carries out the reaction 5-methylsulfanyl-2,3-dioxopentyl phosphate + H2O = 1,2-dihydroxy-5-(methylsulfanyl)pent-1-en-3-one + phosphate. Its pathway is amino-acid biosynthesis; L-methionine biosynthesis via salvage pathway; L-methionine from S-methyl-5-thio-alpha-D-ribose 1-phosphate: step 3/6. It functions in the pathway amino-acid biosynthesis; L-methionine biosynthesis via salvage pathway; L-methionine from S-methyl-5-thio-alpha-D-ribose 1-phosphate: step 4/6. Functionally, bifunctional enzyme that catalyzes the enolization of 2,3-diketo-5-methylthiopentyl-1-phosphate (DK-MTP-1-P) into the intermediate 2-hydroxy-3-keto-5-methylthiopentenyl-1-phosphate (HK-MTPenyl-1-P), which is then dephosphorylated to form the acireductone 1,2-dihydroxy-3-keto-5-methylthiopentene (DHK-MTPene). This is Enolase-phosphatase E1 from Anopheles gambiae (African malaria mosquito).